Reading from the N-terminus, the 20-residue chain is Malate dehydrogenase (20 aa).

8–14 provides a ligand contact to NAD(+); the sequence is GAAGQIG.

Belongs to the LDH/MDH superfamily. MDH type 2 family.

It carries out the reaction (S)-malate + NAD(+) = oxaloacetate + NADH + H(+). Its function is as follows. Catalyzes the reversible oxidation of malate to oxaloacetate. The chain is Malate dehydrogenase (mdh) from Microtetraspora glauca.